The chain runs to 442 residues: tRNA modification GTPase MnmE (442 aa).

Positions 23, 82, and 121 each coordinate (6S)-5-formyl-5,6,7,8-tetrahydrofolate. The region spanning 217–363 (PFKIAIIGET…LVDLLTKYIN (147 aa)) is the TrmE-type G domain. N227 contributes to the K(+) binding site. Residues 227–232 (NVGKSS), 246–252 (SNIKGST), and 271–274 (DTAG) each bind GTP. S231 is a binding site for Mg(2+). 3 residues coordinate K(+): S246, I248, and S251. T252 lines the Mg(2+) pocket. K442 contributes to the (6S)-5-formyl-5,6,7,8-tetrahydrofolate binding site.

This sequence belongs to the TRAFAC class TrmE-Era-EngA-EngB-Septin-like GTPase superfamily. TrmE GTPase family. As to quaternary structure, homodimer. Heterotetramer of two MnmE and two MnmG subunits. Requires K(+) as cofactor.

It is found in the cytoplasm. Functionally, exhibits a very high intrinsic GTPase hydrolysis rate. Involved in the addition of a carboxymethylaminomethyl (cmnm) group at the wobble position (U34) of certain tRNAs, forming tRNA-cmnm(5)s(2)U34. In Mycoplasma genitalium (strain ATCC 33530 / DSM 19775 / NCTC 10195 / G37) (Mycoplasmoides genitalium), this protein is tRNA modification GTPase MnmE.